Consider the following 415-residue polypeptide: Mitochondrial tRNA-specific 2-thiouridylase 1 (415 aa).

ATP-binding positions include 37–44 (AMSGGVDS) and Met-63. The segment at 124–126 (NPD) is interaction with target base in tRNA. The active-site Nucleophile is Cys-129. Residues Cys-129 and Cys-234 are joined by a disulfide bond. Gly-159 provides a ligand contact to ATP. The segment at 183–185 (KDQ) is interaction with tRNA. Cys-234 functions as the Cysteine persulfide intermediate in the catalytic mechanism. The interaction with tRNA stretch occupies residues 356–357 (RH).

The protein belongs to the MnmA/TRMU family.

The protein resides in the mitochondrion. It carries out the reaction 5-taurinomethyluridine(34) in tRNA + S-sulfanyl-L-cysteinyl-[protein] + AH2 + ATP = 5-taurinomethyl-2-thiouridine(34) in tRNA + L-cysteinyl-[protein] + A + AMP + diphosphate + H(+). Its function is as follows. Catalyzes the 2-thiolation of uridine at the wobble position (U34) of mitochondrial tRNA(Lys), tRNA(Glu) and tRNA(Gln). Required for the formation of 5-taurinomethyl-2-thiouridine (tm5s2U) of mitochondrial tRNA(Lys), tRNA(Glu), and tRNA(Gln) at the wobble position. ATP is required to activate the C2 atom of the wobble base. This is Mitochondrial tRNA-specific 2-thiouridylase 1 from Schizosaccharomyces pombe (strain 972 / ATCC 24843) (Fission yeast).